Reading from the N-terminus, the 215-residue chain is Protein C' (215 aa).

Disordered regions lie at residues 12 to 34 (MPSFLKKILKLRGRRQEEESRSR) and 51 to 71 (SEGTEAGSTTPSTLPKDQALP). The interval 15 to 22 (FLKKILKL) is involved in self-degradation and in host STAT1 degradation. Polar residues predominate over residues 51 to 65 (SEGTEAGSTTPSTLP).

It belongs to the respirovirus protein C family. As to quaternary structure, the different isoforms interact (via C-terminus) with unphosphorylated and phosphorylated human STAT1 (via N-terminus), favoring the formation of parallel STAT1 homodimers. The different isoforms do not interact with host STAT2. C protein interacts with L protein; this interaction has an inhibitory effect on viral transcription and replication. In terms of processing, Y1 and Y2 proteins are produced not only by alternative initiation, but also by proteolytic cleavage of C'. Only alternative initiation is detected in vitro, whereas in vivo cleavage seems to be predominant.

It is found in the host cytoplasm. Functionally, the different products prevent the establishment of cellular antiviral state by blocking the interferon-alpha/beta (IFN-alpha/beta) and IFN-gamma signaling pathways. They inhibit IFN-alpha/beta induced tyrosine phosphorylation of STAT1 and STAT2. Blocking the IFN-alpha/beta pathway requires binding to STAT1 in the cytoplasm. They inhibit IFN-gamma induced serine phosphorylation of STAT1. Block the IFN-gamma pathway by binding to and stabilizing the parallel form of the STAT1 dimer, further inducing high-molecular-weight complex formation and inhibition of transcription by IFN-gamma. May also have a role in preventing the cell to enter apoptosis. Modulate regulation of viral transcription and replication. Overexpression inhibits the viral RNA polymerase. The absence of all C', C, Y1 and Y2 proteins leads to viral delayed growth. Plays an important role in virion particles release. Modulates virion shape. This Sendai virus (strain Harris) (SeV) protein is Protein C' (P/V/C).